A 377-amino-acid chain; its full sequence is Anhydro-N-acetylmuramic acid kinase (377 aa).

Residue 18-25 (GTSADGID) participates in ATP binding.

This sequence belongs to the anhydro-N-acetylmuramic acid kinase family.

The catalysed reaction is 1,6-anhydro-N-acetyl-beta-muramate + ATP + H2O = N-acetyl-D-muramate 6-phosphate + ADP + H(+). It functions in the pathway amino-sugar metabolism; 1,6-anhydro-N-acetylmuramate degradation. Its pathway is cell wall biogenesis; peptidoglycan recycling. Catalyzes the specific phosphorylation of 1,6-anhydro-N-acetylmuramic acid (anhMurNAc) with the simultaneous cleavage of the 1,6-anhydro ring, generating MurNAc-6-P. Is required for the utilization of anhMurNAc either imported from the medium or derived from its own cell wall murein, and thus plays a role in cell wall recycling. This Xanthomonas campestris pv. campestris (strain 8004) protein is Anhydro-N-acetylmuramic acid kinase.